Here is a 195-residue protein sequence, read N- to C-terminus: Glycerol-3-phosphate acyltransferase (195 aa).

5 helical membrane passes run 3–23 (IHAV…GLIL), 53–73 (AVMT…LAKI), 80–100 (FAFI…WLLF), 115–135 (LIEY…FAIF), and 147–167 (IFVA…VFIA).

It belongs to the PlsY family. Probably interacts with PlsX.

The protein localises to the cell inner membrane. It catalyses the reaction an acyl phosphate + sn-glycerol 3-phosphate = a 1-acyl-sn-glycero-3-phosphate + phosphate. Its pathway is lipid metabolism; phospholipid metabolism. Functionally, catalyzes the transfer of an acyl group from acyl-phosphate (acyl-PO(4)) to glycerol-3-phosphate (G3P) to form lysophosphatidic acid (LPA). This enzyme utilizes acyl-phosphate as fatty acyl donor, but not acyl-CoA or acyl-ACP. This chain is Glycerol-3-phosphate acyltransferase, found in Ehrlichia chaffeensis (strain ATCC CRL-10679 / Arkansas).